The following is a 232-amino-acid chain: RNA chaperone ProQ (232 aa).

A disordered region spans residues 105 to 182; it reads EAKARVQAQR…REEQHTPVSD (78 aa). A compositionally biased stretch (basic and acidic residues) spans 117-136; it reads QQAKKREAAAAAGEKEDAPR. Positions 137–146 are enriched in basic residues; the sequence is RERKPRPTTP. The span at 147–177 shows a compositional bias: basic and acidic residues; that stretch reads RRKEGAERKPRAQKPVEKAPKTVKAPREEQH.

The protein belongs to the ProQ family.

The protein resides in the cytoplasm. Its function is as follows. RNA chaperone with significant RNA binding, RNA strand exchange and RNA duplexing activities. May regulate ProP activity through an RNA-based, post-transcriptional mechanism. In Shigella boydii serotype 18 (strain CDC 3083-94 / BS512), this protein is RNA chaperone ProQ.